A 30-amino-acid polypeptide reads, in one-letter code: Photosystem I reaction center subunit XII (30 aa).

A helical membrane pass occupies residues 7–29 (VYIALMAALLASVLAIRLGATLY).

The protein belongs to the PsaM family.

Its subcellular location is the plastid. The protein resides in the chloroplast thylakoid membrane. In Thalassiosira pseudonana (Marine diatom), this protein is Photosystem I reaction center subunit XII.